A 334-amino-acid polypeptide reads, in one-letter code: Ficolin-1 (334 aa).

The N-terminal stretch at 1 to 17 (MQWPTLWAFSGLLCLCP) is a signal peptide. Residues 47 to 117 (SCPGFPGPPG…SLGEKELGDT (71 aa)) form a disordered region. The 39-residue stretch at 50–88 (GFPGPPGPKGEPGSPAGRGERGFQGSPGKMGPAGSKGEP) folds into the Collagen-like domain. Residues 117–334 (TLCQRGPRSC…KVAEMKIRAS (218 aa)) enclose the Fibrinogen C-terminal domain. Cystine bridges form between cysteine 119–cysteine 147 and cysteine 126–cysteine 154. The interval 123–162 (PRSCKDLLTRGIFLTGWYTIHLPDCRPLTVLCDMDVDGGG) is a domain; contributes to trimerization. Residues 163–251 (WTVFQRRVDG…LTLGQFLEGT (89 aa)) form a b domain; contributes to trimerization region. N-linked (GlcNAc...) asparagine glycosylation occurs at asparagine 261. Aspartate 270 and aspartate 272 together coordinate Ca(2+). An intrachain disulfide couples cysteine 278 to cysteine 291. A carbohydrate is bound at residue 290–292 (NCH). The p domain stretch occupies residues 325 to 334 (KVAEMKIRAS).

This sequence belongs to the ficolin lectin family. Homotrimer. Interacts with elastin/ELN. Interacts (via Fibrinogen C-terminal domain) with FFAR2. Interacts with CRP; may regulate monocyte activation by FCN1. As to expression, highly expressed in liver and spleen.

It localises to the secreted. The protein resides in the cell membrane. In terms of biological role, extracellular lectin functioning as a pattern-recognition receptor in innate immunity. Binds the sugar moieties of pathogen-associated molecular patterns (PAMPs) displayed on microbes and activates the lectin pathway of the complement system. May also activate monocytes through a G protein-coupled receptor, FFAR2, inducing the secretion of interleukin-8/IL-8. Binds preferentially to 9-O-acetylated 2-6-linked sialic acid derivatives and to various glycans containing sialic acid engaged in a 2-3 linkage. In Mus musculus (Mouse), this protein is Ficolin-1 (Fcn1).